Reading from the N-terminus, the 519-residue chain is Ribonuclease Y (519 aa).

A helical transmembrane segment spans residues 3-23; that stretch reads LMIFAYIAIGAVLGAGTGYLL. Residues 209 to 272 enclose the KH domain; the sequence is TVTAVTLPSE…QVAKMALERL (64 aa). The region spanning 335–428 is the HD domain; it reads VLQHSLEVSA…VQAADSISGA (94 aa).

It belongs to the RNase Y family.

It is found in the cell membrane. Endoribonuclease that initiates mRNA decay. The sequence is that of Ribonuclease Y from Nitratidesulfovibrio vulgaris (strain ATCC 29579 / DSM 644 / CCUG 34227 / NCIMB 8303 / VKM B-1760 / Hildenborough) (Desulfovibrio vulgaris).